Consider the following 199-residue polypeptide: Interferon kappa (199 aa).

The N-terminal stretch at 1 to 21 is a signal peptide; sequence MTPKFLWLVALVALYIPPIQS. Cystine bridges form between C24–C119 and C49–C162.

It belongs to the alpha/beta interferon family. As to expression, expressed at low levels in peritoneal macrophages.

The protein resides in the secreted. Its function is as follows. May play a role in the regulation of immune cell function. The chain is Interferon kappa (Ifnk) from Mus musculus (Mouse).